The sequence spans 422 residues: Telomerase-associated protein of 50 kDa (422 aa).

Component of the telomerase holoenzyme complex, composed of the catalytic core (the catalytic subunit TERT, the telomerase RNA template component TER and TAP65/p65), which is associated with two heterotrimeric subcomplexes: (i) the replication protein A (RPA)-related subcomplex, composed of TEB1, RPA2/TEB2 and RPA3/TEB3 and (ii) the CST-like subcomplex, composed of TAP75/p75, TAP45/p45 and TAP19/p19. TEB1 and the CST-like subcomplex are tethered to the catalytic core by TAP50/p50.

It is found in the chromosome. Its subcellular location is the telomere. In terms of biological role, tethering component of the holoenzyme telomerase ribonucleoprotein (RNP) complex. Telomerase is an essential ribonucleoprotein enzyme that copies new telomeric repeats onto chromosome ends by repetitively synthesizing the short telomere-repeat sequence 5'-TTGGGG-3' using an RNA template component TER. In the telomerase holoenzyme complex, acts as a hub that anchors the two heterotrimeric subcomplexes with the catalytic core. The sequence is that of Telomerase-associated protein of 50 kDa from Tetrahymena thermophila (strain SB210).